Here is a 465-residue protein sequence, read N- to C-terminus: 3-isopropylmalate dehydratase large subunit (465 aa).

[4Fe-4S] cluster is bound by residues Cys-347, Cys-407, and Cys-410. The segment at 417 to 443 is disordered; the sequence is TLKPGERSASTSNRNFEGRQGKGGRTH.

It belongs to the aconitase/IPM isomerase family. LeuC type 1 subfamily. In terms of assembly, heterodimer of LeuC and LeuD. Requires [4Fe-4S] cluster as cofactor.

It catalyses the reaction (2R,3S)-3-isopropylmalate = (2S)-2-isopropylmalate. Its pathway is amino-acid biosynthesis; L-leucine biosynthesis; L-leucine from 3-methyl-2-oxobutanoate: step 2/4. Catalyzes the isomerization between 2-isopropylmalate and 3-isopropylmalate, via the formation of 2-isopropylmaleate. This chain is 3-isopropylmalate dehydratase large subunit, found in Thermobifida fusca (strain YX).